Reading from the N-terminus, the 374-residue chain is C-X-C chemokine receptor type 5 (374 aa).

Over 1–57 (MNSPISLDMGAITYNMDDLYKELAIYSNSTEIPLQDSIFCSTEEGPLLTSFKTIFMP) the chain is Extracellular. The N-linked (GlcNAc...) asparagine glycan is linked to asparagine 28. The chain crosses the membrane as a helical span at residues 58 to 78 (VAYSLIFLLGMMGNILVLVIL). The Cytoplasmic portion of the chain corresponds to 79-90 (ERHRHTRSSTET). The helical transmembrane segment at 91-111 (FLFHLAVADLLLVFILPFAVA) threads the bilayer. Residues 112–126 (EGSVGWVLGTFLCKT) are Extracellular-facing. The cysteines at positions 124 and 204 are disulfide-linked. The chain crosses the membrane as a helical span at residues 127 to 147 (VIALHKINFYCSSLLLACIAV). Residues 148–169 (DRYLAIVHAVHAYRRRRLLSIH) are Cytoplasmic-facing. Residues 170–190 (ITCSTIWLAGFLFALPELLFA) form a helical membrane-spanning segment. Topologically, residues 191–221 (KVVQPHNNESLPQCIFSQENEAETRAWFASR) are extracellular. The N-linked (GlcNAc...) asparagine glycan is linked to asparagine 198. The chain crosses the membrane as a helical span at residues 222–242 (FLYHTGGFLLPMLVMAWCYVG). Over 243–261 (VVHRLLQAQRRPQRQKAVR) the chain is Cytoplasmic. The helical transmembrane segment at 262–282 (VAILVTSIFLLCWSPYHIVIF) threads the bilayer. The Extracellular segment spans residues 283-306 (LDTLERLKAVNSSCELSGYLSVAI). Residues 307–327 (TLCEFLGLAHCCLNPMLYTFA) traverse the membrane as a helical segment. Residues 328–374 (GVKFRSDLSRLLTKLGCAGPASLCQLFPGWRKSSLSESENATSLTTF) are Cytoplasmic-facing.

This sequence belongs to the G-protein coupled receptor 1 family. Expressed in neuronal and lymphatic tissue.

The protein localises to the cell membrane. Cytokine receptor that binds to B-lymphocyte chemoattractant (BLC). Involved in B-cell migration into B-cell follicles of spleen and Peyer patches but not into those of mesenteric or peripheral lymph nodes. This Rattus norvegicus (Rat) protein is C-X-C chemokine receptor type 5 (Cxcr5).